Here is a 61-residue protein sequence, read N- to C-terminus: Large ribosomal subunit protein eL37 (61 aa).

Zn(2+) contacts are provided by C20, C23, C35, and C38. Residues C20–C38 form a C4-type zinc finger.

This sequence belongs to the eukaryotic ribosomal protein eL37 family. It depends on Zn(2+) as a cofactor.

In terms of biological role, binds to the 23S rRNA. The protein is Large ribosomal subunit protein eL37 (rpl37e) of Methanocaldococcus jannaschii (strain ATCC 43067 / DSM 2661 / JAL-1 / JCM 10045 / NBRC 100440) (Methanococcus jannaschii).